A 218-amino-acid chain; its full sequence is Uracil-DNA glycosylase (218 aa).

Aspartate 59 functions as the Proton acceptor in the catalytic mechanism.

This sequence belongs to the uracil-DNA glycosylase (UDG) superfamily. UNG family.

It localises to the cytoplasm. It carries out the reaction Hydrolyzes single-stranded DNA or mismatched double-stranded DNA and polynucleotides, releasing free uracil.. Excises uracil residues from the DNA which can arise as a result of misincorporation of dUMP residues by DNA polymerase or due to deamination of cytosine. The polypeptide is Uracil-DNA glycosylase (Staphylococcus aureus (strain JH1)).